Consider the following 198-residue polypeptide: NADH-quinone oxidoreductase subunit B 1 (198 aa).

The [4Fe-4S] cluster site is built by Cys77, Cys78, Cys142, and Cys172.

This sequence belongs to the complex I 20 kDa subunit family. NDH-1 is composed of 14 different subunits. Subunits NuoB, C, D, E, F, and G constitute the peripheral sector of the complex. The cofactor is [4Fe-4S] cluster.

The protein localises to the cell inner membrane. The catalysed reaction is a quinone + NADH + 5 H(+)(in) = a quinol + NAD(+) + 4 H(+)(out). In terms of biological role, NDH-1 shuttles electrons from NADH, via FMN and iron-sulfur (Fe-S) centers, to quinones in the respiratory chain. The immediate electron acceptor for the enzyme in this species is believed to be ubiquinone. Couples the redox reaction to proton translocation (for every two electrons transferred, four hydrogen ions are translocated across the cytoplasmic membrane), and thus conserves the redox energy in a proton gradient. The protein is NADH-quinone oxidoreductase subunit B 1 of Rhodopseudomonas palustris (strain ATCC BAA-98 / CGA009).